The chain runs to 352 residues: Isoflavone-7-O-methyltransferase 6 (352 aa).

118 to 127 (VLDPTLSGSY) serves as a coordination point for substrate. S-adenosyl-L-methionine contacts are provided by glycine 196, aspartate 219, aspartate 239, methionine 240, and lysine 253. Histidine 257 acts as the Proton acceptor in catalysis.

Belongs to the class I-like SAM-binding methyltransferase superfamily. Cation-independent O-methyltransferase family. COMT subfamily. In terms of assembly, homodimer.

The catalysed reaction is a 7-hydroxyisoflavone + S-adenosyl-L-methionine = a 7-methoxyisoflavone + S-adenosyl-L-homocysteine + H(+). The protein operates within phytoalexin biosynthesis; medicarpin biosynthesis. Its function is as follows. Transfers a methyl group to 7-hydroxyls of the isoflavones daidzein, genistein and 6,7,4'-trihydroxyisoflavone. Can also methylate (+)6a-hydroxymaackiain with lower efficiency. The sequence is that of Isoflavone-7-O-methyltransferase 6 from Medicago sativa (Alfalfa).